A 756-amino-acid chain; its full sequence is Ent-kaurene synthase, chloroplastic (756 aa).

Residues D507 and D511 each coordinate Mg(2+). Positions 507-511 (DDFFD) match the DDXXD motif motif. Residues 606 to 622 (YVSFALGPIVLPCLYLV) form a helical membrane-spanning segment. 3 residues coordinate Mg(2+): N651, T655, and E659.

It belongs to the terpene synthase family. Mg(2+) serves as cofactor. In terms of tissue distribution, present in both leaves and flowers.

It is found in the plastid. Its subcellular location is the chloroplast membrane. It catalyses the reaction ent-copalyl diphosphate = ent-kaur-16-ene + diphosphate. The protein operates within plant hormone biosynthesis; gibberellin biosynthesis. In terms of biological role, involved in the biosynthesis of labdane-type diterpenoid including marrubiin and other labdane-related furanoid diterpenoids with potential applications as anti-diabetics, analgesics or vasorelaxants. Terpene synthase that produces ent-kaurene from ent-copalyl diphosphate (ent-CPP). This is Ent-kaurene synthase, chloroplastic from Marrubium vulgare (White horehound).